The chain runs to 239 residues: uncharacterized protein (239 aa).

Residues 1-23 form the signal peptide; the sequence is MKTMVAMLLAAVGVAVSASSTLA. Residues 220–230 are compositionally biased toward basic and acidic residues; sequence AHPKQTLRDQR. A disordered region spans residues 220-239; that stretch reads AHPKQTLRDQRPAGGDEITK.

This is an uncharacterized protein from Sinorhizobium fredii (strain NBRC 101917 / NGR234).